The primary structure comprises 505 residues: Forkhead box protein O4 (505 aa).

Disordered stretches follow at residues 1–66 (MDPE…HSEP), 175–244 (SSWW…SPCP), and 257–276 (RPRS…PMRP). T32 bears the Phosphothreonine; by PKB/AKT1 mark. Residues 97 to 215 (RRNAWGNQSY…RGRSKGPKKK (119 aa)) are required for interaction with FOXK1. Positions 100-188 (AWGNQSYAEL…MLNPDGGKGG (89 aa)) form a DNA-binding region, fork-head. S197 carries the phosphoserine; by PKB/AKT1 modification. The span at 205 to 216 (LRGRSKGPKKKP) shows a compositional bias: basic residues. A compositionally biased stretch (polar residues) spans 257–271 (RPRSSSNASTVSTRL). S262 is subject to Phosphoserine; by PKB/AKT1.

In terms of assembly, interacts with CREBBP/CBP, MYOCD, SIRT1, SRF and YWHAZ. Acetylated by CREBBP/CBP and deacetylated by SIRT1. Binding of YWHAZ inhibits DNA-binding. Interacts with USP7; the interaction is enhanced in presence of hydrogen peroxide and occurs independently of TP53. Interacts with NLK, and this inhibits monoubiquitination and transcriptional activity. Interacts with FOXK1; the interaction inhibits MEF2C transactivation activity. Post-translationally, acetylation by CREBBP/CBP is induced by oxidative stress and inhibits transcriptional activity. Deacetylation by SIRT1 is NAD-dependent and stimulates transcriptional activity. In terms of processing, phosphorylation by PKB/AKT1 inhibits transcriptional activity and is responsible for cytoplasmic localization. May be phosphorylated at multiple sites by NLK. Monoubiquitinated; monoubiquitination is induced by oxidative stress and reduced by deacetylase inhibitors; results in its relocalization to the nucleus and its increased transcriptional activity. Deubiquitinated by USP7; deubiquitination is induced by oxidative stress; enhances its interaction with USP7 and consequently, deubiquitination; increases its translocation to the cytoplasm and inhibits its transcriptional activity. Hydrogene-peroxide-induced ubiquitination and USP7-mediated deubiquitination have no major effect on its protein stability. In terms of tissue distribution, strongly expressed in brown adipose tissue and weakly in white adipose tissue (at protein level). Expressed in skeletal muscle.

It localises to the cytoplasm. Its subcellular location is the nucleus. In terms of biological role, transcription factor involved in the regulation of the insulin signaling pathway. Binds to insulin-response elements (IREs) and can activate transcription of IGFBP1. Down-regulates expression of HIF1A and suppresses hypoxia-induced transcriptional activation of HIF1A-modulated genes. Also involved in negative regulation of the cell cycle. Involved in increased proteasome activity in embryonic stem cells (ESCs) by activating expression of PSMD11 in ESCs, leading to enhanced assembly of the 26S proteasome, followed by higher proteasome activity. Represses smooth muscle cell differentiation by inhibiting the transcriptional coactivator activity of myocardin. This Mus musculus (Mouse) protein is Forkhead box protein O4 (Foxo4).